The primary structure comprises 93 residues: uncharacterized protein (93 aa).

This is an uncharacterized protein from Saccharomyces cerevisiae (strain ATCC 204508 / S288c) (Baker's yeast).